A 232-amino-acid polypeptide reads, in one-letter code: 26.5 kDa heat shock protein, mitochondrial (232 aa).

The transit peptide at 1-42 (MALARLALRNLQQKLSPSLMGQSCERGLVGNRHNPMKLNRFM) directs the protein to the mitochondrion. A disordered region spans residues 44-82 (TSAGEQEDKMNTEVSVSEKKSPRQNFPRRRGRKSLWRNT). Basic and acidic residues predominate over residues 49–64 (QEDKMNTEVSVSEKKS). The segment covering 69–78 (FPRRRGRKSL) has biased composition (basic residues). In terms of domain architecture, sHSP spans 114–232 (IFDNFNVNPF…KKNVQEISVE (119 aa)).

It belongs to the small heat shock protein (HSP20) family. May form oligomeric structures.

The protein resides in the mitochondrion. This is 26.5 kDa heat shock protein, mitochondrial (HSP26.5) from Arabidopsis thaliana (Mouse-ear cress).